Consider the following 400-residue polypeptide: CCA-adding enzyme (400 aa).

Residues Gly-28 and Arg-31 each contribute to the ATP site. CTP contacts are provided by Gly-28 and Arg-31. Mg(2+)-binding residues include Asp-41 and Asp-43. Arg-112, Asp-155, Arg-158, Arg-161, and Arg-164 together coordinate ATP. Arg-112, Asp-155, Arg-158, Arg-161, and Arg-164 together coordinate CTP.

This sequence belongs to the tRNA nucleotidyltransferase/poly(A) polymerase family. Bacterial CCA-adding enzyme type 3 subfamily. As to quaternary structure, homodimer. Requires Mg(2+) as cofactor.

It carries out the reaction a tRNA precursor + 2 CTP + ATP = a tRNA with a 3' CCA end + 3 diphosphate. The enzyme catalyses a tRNA with a 3' CCA end + 2 CTP + ATP = a tRNA with a 3' CCACCA end + 3 diphosphate. In terms of biological role, catalyzes the addition and repair of the essential 3'-terminal CCA sequence in tRNAs without using a nucleic acid template. Adds these three nucleotides in the order of C, C, and A to the tRNA nucleotide-73, using CTP and ATP as substrates and producing inorganic pyrophosphate. tRNA 3'-terminal CCA addition is required both for tRNA processing and repair. Also involved in tRNA surveillance by mediating tandem CCA addition to generate a CCACCA at the 3' terminus of unstable tRNAs. While stable tRNAs receive only 3'-terminal CCA, unstable tRNAs are marked with CCACCA and rapidly degraded. In Staphylococcus haemolyticus (strain JCSC1435), this protein is CCA-adding enzyme.